Reading from the N-terminus, the 97-residue chain is DNA-binding protein HU (97 aa).

It belongs to the bacterial histone-like protein family. In terms of assembly, has been isolated in complexes with 5S rRNA and bL25, and with 5S rRNA, bL25 and uL5. Homodimer.

Histone-like DNA-binding protein which is capable of wrapping DNA to stabilize it, and thus to prevent its denaturation under extreme environmental conditions. This is DNA-binding protein HU from Thermus thermophilus (strain ATCC 27634 / DSM 579 / HB8).